We begin with the raw amino-acid sequence, 158 residues long: C-type natriuretic peptide 3 (158 aa).

Positions Met1–Ala21 are cleaved as a signal peptide. The propeptide occupies Lys22–Lys136. Positions Pro32–Gly95 are disordered. Over residues Val47–Glu64 the composition is skewed to basic and acidic residues. Acidic residues predominate over residues Gln65 to Glu86. Cys142 and Cys158 form a disulfide bridge.

This sequence belongs to the natriuretic peptide family.

It is found in the secreted. Its function is as follows. Exhibits natriuretic and vasodepressant activity. Has cGMP-stimulating activity. May help to regulate body fluid homeostasis in a variety of aquatic environments. The protein is C-type natriuretic peptide 3 of Takifugu rubripes (Japanese pufferfish).